The sequence spans 594 residues: Arginine--tRNA ligase (594 aa).

Residues 139-149 (ANPTGPLHVGH) carry the 'HIGH' region motif.

The protein belongs to the class-I aminoacyl-tRNA synthetase family. In terms of assembly, monomer.

It is found in the cytoplasm. The enzyme catalyses tRNA(Arg) + L-arginine + ATP = L-arginyl-tRNA(Arg) + AMP + diphosphate. The sequence is that of Arginine--tRNA ligase from Burkholderia thailandensis (strain ATCC 700388 / DSM 13276 / CCUG 48851 / CIP 106301 / E264).